Reading from the N-terminus, the 72-residue chain is Translation initiation factor IF-1 (72 aa).

The S1-like domain occupies 1 to 72 (MAKEDNIEMQ…SKGRIVFRSR (72 aa)).

This sequence belongs to the IF-1 family. In terms of assembly, component of the 30S ribosomal translation pre-initiation complex which assembles on the 30S ribosome in the order IF-2 and IF-3, IF-1 and N-formylmethionyl-tRNA(fMet); mRNA recruitment can occur at any time during PIC assembly.

The protein resides in the cytoplasm. Functionally, one of the essential components for the initiation of protein synthesis. Stabilizes the binding of IF-2 and IF-3 on the 30S subunit to which N-formylmethionyl-tRNA(fMet) subsequently binds. Helps modulate mRNA selection, yielding the 30S pre-initiation complex (PIC). Upon addition of the 50S ribosomal subunit IF-1, IF-2 and IF-3 are released leaving the mature 70S translation initiation complex. The protein is Translation initiation factor IF-1 of Salmonella paratyphi A (strain ATCC 9150 / SARB42).